A 945-amino-acid chain; its full sequence is Valine--tRNA ligase (945 aa).

The short motif at 42–52 is the 'HIGH' region element; it reads PNVTGTLHMGH. The short motif at 552 to 556 is the 'KMSKS' region element; the sequence is KMSKS. Lys-555 contributes to the ATP binding site. Residues 879 to 945 are a coiled coil; that stretch reads DKAAETARLS…VQNQLAKLKD (67 aa).

It belongs to the class-I aminoacyl-tRNA synthetase family. ValS type 1 subfamily. Monomer.

Its subcellular location is the cytoplasm. The catalysed reaction is tRNA(Val) + L-valine + ATP = L-valyl-tRNA(Val) + AMP + diphosphate. Its function is as follows. Catalyzes the attachment of valine to tRNA(Val). As ValRS can inadvertently accommodate and process structurally similar amino acids such as threonine, to avoid such errors, it has a 'posttransfer' editing activity that hydrolyzes mischarged Thr-tRNA(Val) in a tRNA-dependent manner. This Neisseria gonorrhoeae (strain ATCC 700825 / FA 1090) protein is Valine--tRNA ligase.